The sequence spans 1180 residues: Pyruvate carboxylase 2 (1180 aa).

Ser2 carries the post-translational modification N-acetylserine. Positions 19–471 (EKNKILVANR…WTTFIDDTPQ (453 aa)) constitute a Biotin carboxylation domain. Residues Lys137, Glu221, and His256 each coordinate ATP. One can recognise an ATP-grasp domain in the interval 141–338 (RHLAARANVP…IVSAQIQIAA (198 aa)). Arg313 is a catalytic residue. Residues 558-825 (TLLMDTTWRD…DTGINVEHVR (268 aa)) form the Pyruvate carboxyltransferase domain. Residues 566–570 (RDAHQ) and Arg639 contribute to the substrate site. Residue Asp567 participates in a divalent metal cation binding. Residues Lys735, His765, and His767 each coordinate a divalent metal cation. Residue Lys735 is modified to N6-carboxylysine. Thr899 lines the substrate pocket. The Biotinyl-binding domain occupies 1095–1170 (KADVHDTHQI…DASDLLVVLE (76 aa)). Lys1136 carries the post-translational modification N6-biotinyllysine.

In terms of assembly, homotetramer. The cofactor is biotin. Zn(2+) is required as a cofactor.

Its subcellular location is the cytoplasm. It catalyses the reaction hydrogencarbonate + pyruvate + ATP = oxaloacetate + ADP + phosphate + H(+). The protein operates within carbohydrate biosynthesis; gluconeogenesis. Functionally, pyruvate carboxylase catalyzes a 2-step reaction, involving the ATP-dependent carboxylation of the covalently attached biotin in the first step and the transfer of the carboxyl group to pyruvate in the second. This is Pyruvate carboxylase 2 (PYC2) from Saccharomyces cerevisiae (strain ATCC 204508 / S288c) (Baker's yeast).